A 501-amino-acid chain; its full sequence is Eukaryotic translation initiation factor 3 subunit E (501 aa).

Residues 245–423 (CDLFFYTPYL…ESIESTSTNV (179 aa)) enclose the PCI domain. Residues Ser-477 and Ser-479 each carry the phosphoserine modification.

The protein belongs to the eIF-3 subunit E family. As to quaternary structure, component of the eukaryotic translation initiation factor 3 (eIF-3) complex. The eIF-3 complex appears to include tif32/eif3a, SPAC25G10.08/eif3b, tif33/eif3c, SPBC4C3.07/eif3f, tif35/eif3g and sum1/eif3i. This set of common subunits may also associate exclusively with either moe1/eif3d and int6/eif3e, or with SPAC821.05/eif3h and SPAC1751.03/eif3m. The eIF-3 complex may also include SPAC3A12.13c/eif3j. Also interacts with the proteasome via rpn501/rpn502.

It is found in the cytoplasm. Its function is as follows. Component of the eukaryotic translation initiation factor 3 (eIF-3) complex, which is involved in protein synthesis of a specialized repertoire of mRNAs and, together with other initiation factors, stimulates binding of mRNA and methionyl-tRNAi to the 40S ribosome. The eIF-3 complex specifically targets and initiates translation of a subset of mRNAs involved in cell proliferation (Potential). Required for maintaining the basal level of atf1 and for transcriptional activation of core environmental stress response genes (CESR genes) in response to histidine starvation. May positively regulate proteasome activity. Required for nuclear localization of the proteasome subunit rpn501/rpn502. The polypeptide is Eukaryotic translation initiation factor 3 subunit E (int6) (Schizosaccharomyces pombe (strain 972 / ATCC 24843) (Fission yeast)).